The chain runs to 75 residues: Insecticidal toxin OcyC10 (75 aa).

The N-terminal stretch at 1–19 (MNFATKIVILLLVAALILA) is a signal peptide. 2 disulfides stabilise this stretch: Cys50–Cys62 and Cys56–Cys68.

In terms of tissue distribution, expressed by the venom gland.

The protein resides in the secreted. Insecticidal toxin. The protein is Insecticidal toxin OcyC10 of Opisthacanthus cayaporum (South American scorpion).